A 395-amino-acid polypeptide reads, in one-letter code: Elongation factor Tu (395 aa).

The region spanning 10–204 (KPHVNIGTIG…IVDEYIPTPE (195 aa)) is the tr-type G domain. Residues 19–26 (GHVDHGKT) form a G1 region. 19–26 (GHVDHGKT) provides a ligand contact to GTP. Threonine 26 contacts Mg(2+). A G2 region spans residues 60–64 (GITIN). The tract at residues 81-84 (DAPG) is G3. GTP is bound by residues 81–85 (DAPGH) and 136–139 (NKAD). A G4 region spans residues 136–139 (NKAD). Residues 174–176 (SAL) are G5.

The protein belongs to the TRAFAC class translation factor GTPase superfamily. Classic translation factor GTPase family. EF-Tu/EF-1A subfamily. As to quaternary structure, monomer.

It localises to the cytoplasm. It carries out the reaction GTP + H2O = GDP + phosphate + H(+). Its function is as follows. GTP hydrolase that promotes the GTP-dependent binding of aminoacyl-tRNA to the A-site of ribosomes during protein biosynthesis. The polypeptide is Elongation factor Tu (Lactococcus lactis subsp. lactis (strain IL1403) (Streptococcus lactis)).